We begin with the raw amino-acid sequence, 270 residues long: Cross-pathway control protein 1 (270 aa).

2 disordered regions span residues Gln-114–Pro-135 and Gln-153–Glu-213. Low complexity predominate over residues Ser-184 to Val-195. Residues Ser-216–Glu-270 form the bZIP domain. Positions Lys-222 to Arg-240 are basic motif. The tract at residues Leu-241–Ile-248 is leucine-zipper.

Belongs to the bZIP family. GCN4 subfamily. As to quaternary structure, binds DNA as a dimer.

The protein localises to the nucleus. In terms of biological role, in N.crassa grown under amino acid starvation conditions, this protein is required for increasing the transcription of the genes coding for many amino acid biosynthetic pathways enzymes. This transcription factor binds and recognize the DNA sequence: 5'-TGACTC-3'. The polypeptide is Cross-pathway control protein 1 (cpc-1) (Neurospora crassa (strain ATCC 24698 / 74-OR23-1A / CBS 708.71 / DSM 1257 / FGSC 987)).